A 297-amino-acid chain; its full sequence is Coiled-coil domain-containing protein 159 (297 aa).

The stretch at 147–297 (EELELVREEV…SKSGRSFPPA (151 aa)) forms a coiled coil. A disordered region spans residues 256 to 297 (LRGHKGHQCLSPPLPSWDSDSDCDQDLSQPPFSKSGRSFPPA).

In terms of assembly, interacts with DYNLT2. Interacts with GGNBP1. Interacts with OSBP2.

Its function is as follows. Functions during spermatid development; may participate in the centrosome reduction procedure of spermatids and is required for the formation of the connecting piece/sperm head-tail coupling apparatus (HTCA) and the correct and tight attachment of the flagellum to the nuclear envelope. This is Coiled-coil domain-containing protein 159 (CCDC159) from Homo sapiens (Human).